Consider the following 294-residue polypeptide: ADP-ribosyl-[dinitrogen reductase] glycohydrolase (294 aa).

ADP-D-ribose-binding positions include 100-102 (NTC), glutamate 121, histidine 158, and tyrosine 212. 3 residues coordinate Mn(2+): aspartate 243, aspartate 245, and threonine 246.

This sequence belongs to the ADP-ribosylglycohydrolase family. Monomer. Requires Mn(2+) as cofactor.

The protein resides in the cytoplasm. It carries out the reaction N(omega)-alpha-(ADP-D-ribosyl)-L-arginyl-[dinitrogen reductase] + H2O = L-arginyl-[dinitrogen reductase] + ADP-D-ribose. In terms of biological role, involved in the regulation of nitrogen fixation activity by the reversible ADP-ribosylation of one subunit of the homodimeric dinitrogenase reductase component of the nitrogenase enzyme complex. The ADP-ribosyltransferase (DraT) transfers the ADP-ribose group from NAD to dinitrogenase reductase. The ADP-ribose group is removed through the action of the ADP-ribosylglycohydrolase (DraG, this entry). In Rhodospirillum rubrum, this protein is ADP-ribosyl-[dinitrogen reductase] glycohydrolase.